The following is a 336-amino-acid chain: Mitochondrial amidoxime reducing component 2 (336 aa).

The N-terminal 35 residues, 1–35 (MGAAGSSALARLGLPALPGPRWLGVAALGLAAVAL), are a transit peptide targeting the mitochondrion. Residues Lys-138, Lys-144, Lys-173, Lys-187, Lys-287, and Lys-294 each participate in a glycyl lysine isopeptide (Lys-Gly) (interchain with G-Cter in ubiquitin) cross-link. Residues 188 to 334 (ARASNEIFPS…LKVGDPVYQM (147 aa)) form the MOSC domain.

Component of a complex composed of cytochrome b5, NADH-cytochrome b5 reductase (CYB5R3) and MTARC2. Requires Mo-molybdopterin as cofactor. In terms of processing, ubiquitinated by PRKN during mitophagy, leading to its degradation and enhancement of mitophagy. Deubiquitinated by USP30.

The protein resides in the mitochondrion outer membrane. It localises to the peroxisome. It catalyses the reaction N(omega)-hydroxy-L-arginine + 2 Fe(II)-[cytochrome b5] + 2 H(+) = L-arginine + 2 Fe(III)-[cytochrome b5] + H2O. In terms of biological role, catalyzes the reduction of N-oxygenated molecules, acting as a counterpart of cytochrome P450 and flavin-containing monooxygenases in metabolic cycles. As a component of prodrug-converting system, reduces a multitude of N-hydroxylated prodrugs particularly amidoximes, leading to increased drug bioavailability. May be involved in mitochondrial N(omega)-hydroxy-L-arginine (NOHA) reduction, regulating endogenous nitric oxide levels and biosynthesis. Postulated to cleave the N-OH bond of N-hydroxylated substrates in concert with electron transfer from NADH to cytochrome b5 reductase then to cytochrome b5, the ultimate electron donor that primes the active site for substrate reduction. The polypeptide is Mitochondrial amidoxime reducing component 2 (MTARC2) (Bos taurus (Bovine)).